A 470-amino-acid chain; its full sequence is ATP synthase subunit beta (470 aa).

155-162 (GGAGVGKT) is an ATP binding site.

It belongs to the ATPase alpha/beta chains family. F-type ATPases have 2 components, CF(1) - the catalytic core - and CF(0) - the membrane proton channel. CF(1) has five subunits: alpha(3), beta(3), gamma(1), delta(1), epsilon(1). CF(0) has three main subunits: a(1), b(2) and c(9-12). The alpha and beta chains form an alternating ring which encloses part of the gamma chain. CF(1) is attached to CF(0) by a central stalk formed by the gamma and epsilon chains, while a peripheral stalk is formed by the delta and b chains.

The protein resides in the cell membrane. The catalysed reaction is ATP + H2O + 4 H(+)(in) = ADP + phosphate + 5 H(+)(out). In terms of biological role, produces ATP from ADP in the presence of a proton gradient across the membrane. The catalytic sites are hosted primarily by the beta subunits. The polypeptide is ATP synthase subunit beta (Staphylococcus aureus (strain MW2)).